A 342-amino-acid polypeptide reads, in one-letter code: Holliday junction branch migration complex subunit RuvB (342 aa).

The interval 1 to 179 (MTSILSPEKS…FGIPMRLNFY (179 aa)) is large ATPase domain (RuvB-L). Residues Leu-18, Arg-19, Gly-60, Lys-63, Thr-64, Thr-65, 126-128 (EDF), Arg-169, Tyr-179, and Arg-216 contribute to the ATP site. Thr-64 serves as a coordination point for Mg(2+). The tract at residues 180 to 250 (NTEELKKVLN…IANFGLNRLE (71 aa)) is small ATPAse domain (RuvB-S). Residues 253–342 (IIGLDSNDYR…HQFNIFNDNE (90 aa)) form a head domain (RuvB-H) region. Arg-289, Arg-308, and Arg-313 together coordinate DNA.

This sequence belongs to the RuvB family. Homohexamer. Forms an RuvA(8)-RuvB(12)-Holliday junction (HJ) complex. HJ DNA is sandwiched between 2 RuvA tetramers; dsDNA enters through RuvA and exits via RuvB. An RuvB hexamer assembles on each DNA strand where it exits the tetramer. Each RuvB hexamer is contacted by two RuvA subunits (via domain III) on 2 adjacent RuvB subunits; this complex drives branch migration. In the full resolvosome a probable DNA-RuvA(4)-RuvB(12)-RuvC(2) complex forms which resolves the HJ.

Its subcellular location is the cytoplasm. The catalysed reaction is ATP + H2O = ADP + phosphate + H(+). In terms of biological role, the RuvA-RuvB-RuvC complex processes Holliday junction (HJ) DNA during genetic recombination and DNA repair, while the RuvA-RuvB complex plays an important role in the rescue of blocked DNA replication forks via replication fork reversal (RFR). RuvA specifically binds to HJ cruciform DNA, conferring on it an open structure. The RuvB hexamer acts as an ATP-dependent pump, pulling dsDNA into and through the RuvAB complex. RuvB forms 2 homohexamers on either side of HJ DNA bound by 1 or 2 RuvA tetramers; 4 subunits per hexamer contact DNA at a time. Coordinated motions by a converter formed by DNA-disengaged RuvB subunits stimulates ATP hydrolysis and nucleotide exchange. Immobilization of the converter enables RuvB to convert the ATP-contained energy into a lever motion, pulling 2 nucleotides of DNA out of the RuvA tetramer per ATP hydrolyzed, thus driving DNA branch migration. The RuvB motors rotate together with the DNA substrate, which together with the progressing nucleotide cycle form the mechanistic basis for DNA recombination by continuous HJ branch migration. Branch migration allows RuvC to scan DNA until it finds its consensus sequence, where it cleaves and resolves cruciform DNA. The protein is Holliday junction branch migration complex subunit RuvB of Rickettsia bellii (strain RML369-C).